A 123-amino-acid chain; its full sequence is Small ribosomal subunit protein uS12 (123 aa).

Aspartate 89 carries the 3-methylthioaspartic acid modification.

It belongs to the universal ribosomal protein uS12 family. As to quaternary structure, part of the 30S ribosomal subunit. Contacts proteins S8 and S17. May interact with IF1 in the 30S initiation complex.

In terms of biological role, with S4 and S5 plays an important role in translational accuracy. Interacts with and stabilizes bases of the 16S rRNA that are involved in tRNA selection in the A site and with the mRNA backbone. Located at the interface of the 30S and 50S subunits, it traverses the body of the 30S subunit contacting proteins on the other side and probably holding the rRNA structure together. The combined cluster of proteins S8, S12 and S17 appears to hold together the shoulder and platform of the 30S subunit. This is Small ribosomal subunit protein uS12 from Rhodopseudomonas palustris (strain BisB18).